The chain runs to 288 residues: Bifunctional protein FolD (288 aa).

Residues 166–168 and Ile232 contribute to the NADP(+) site; that span reads GAS.

This sequence belongs to the tetrahydrofolate dehydrogenase/cyclohydrolase family. As to quaternary structure, homodimer.

The enzyme catalyses (6R)-5,10-methylene-5,6,7,8-tetrahydrofolate + NADP(+) = (6R)-5,10-methenyltetrahydrofolate + NADPH. The catalysed reaction is (6R)-5,10-methenyltetrahydrofolate + H2O = (6R)-10-formyltetrahydrofolate + H(+). The protein operates within one-carbon metabolism; tetrahydrofolate interconversion. In terms of biological role, catalyzes the oxidation of 5,10-methylenetetrahydrofolate to 5,10-methenyltetrahydrofolate and then the hydrolysis of 5,10-methenyltetrahydrofolate to 10-formyltetrahydrofolate. The protein is Bifunctional protein FolD of Escherichia coli O8 (strain IAI1).